The following is a 473-amino-acid chain: DNA (cytosine-5)-methyltransferase DRM1A (473 aa).

The UBA 1 domain occupies 20 to 61 (SAPSALVAYFLGMGFSREMVFRAIKEIGDTDSEQILELLLTY). Residues 84–101 (EEEDEEEDVNWDEDDTVD) show a composition bias toward acidic residues. Residues 84 to 115 (EEEDEEEDVNWDEDDTVDNFDRATYSDGSGDE) form a disordered region. The UBA 2 domain maps to 120 to 140 (EMSEKDEKIKSLVSMGFPEDE). The SAM-dependent MTase DRM-type domain maps to 204–431 (VHRNLPDQAL…DSVKTIMASI (228 aa)).

The protein belongs to the class I-like SAM-binding methyltransferase superfamily. DRM-methyltransferase family.

Its subcellular location is the nucleus. It catalyses the reaction a 2'-deoxycytidine in DNA + S-adenosyl-L-methionine = a 5-methyl-2'-deoxycytidine in DNA + S-adenosyl-L-homocysteine + H(+). Involved in de novo DNA methylation. Involved in RNA-directed DNA methylation (RdDM). This is DNA (cytosine-5)-methyltransferase DRM1A from Oryza sativa subsp. japonica (Rice).